Reading from the N-terminus, the 85-residue chain is Prosialokinin (85 aa).

The first 23 residues, 1–23 (MNMFITVQIVIVLVLAVLSEAAS), serve as a signal peptide directing secretion. Residues 24 to 74 (LPTATERKDAMDEGPNQSDEPEGSVADPSTKDDDYSDSLKQDEKYYKVRLL) constitute a propeptide that is removed on maturation. The segment at 26-61 (TATERKDAMDEGPNQSDEPEGSVADPSTKDDDYSDS) is disordered. Residues 52–61 (STKDDDYSDS) show a composition bias toward basic and acidic residues. Met-84 is subject to Methionine amide.

It belongs to the tachykinin family. Expressed exclusively in the medial lobe of female salivary gland. Not detected in female carcass without head and salivary glands. Not detected in male tissues.

It is found in the secreted. In terms of biological role, vasodilatory peptide. Facilitates mosquito blood feeding on vertebrate host. Induces nitric oxide (NO) release in blood vessels through the activation of the nitric oxide synthase (NOS3). Enhances endothelial permeability and induces edema at the site of inoculation in the host. Induces host smooth muscle contraction. Down-regulates production of Th1 cytokines, such as IL2 and IFN-gamma (IFNG), in mouse splenocytes. Up-regulates production of Th2 cytokines, such as IL4 and IL10, in mouse splenocytes. Promotes recruitment of host leukocytes, especially neutrophils and CD8+ T cells, to the bite site. Modulates cytokine production by host macrophages. Modulates populations of monocytes/macrophages, plasmacytoid dendritic cells, B cells, CD4+ T cells, NK and NKT cells, shifting mammalian immunity towards Th2 responses. Functionally, (Microbial infection) Promotes Semliki Forest virus infection in the host. Its function is as follows. (Microbial infection) Does not affect Zika virus replication in the host. The protein is Prosialokinin of Aedes aegypti (Yellowfever mosquito).